The primary structure comprises 232 residues: Heptaprenylglyceryl phosphate synthase (232 aa).

Lysine 12 serves as a coordination point for sn-glycerol 1-phosphate. Mg(2+) contacts are provided by aspartate 14 and threonine 40. Sn-glycerol 1-phosphate contacts are provided by residues 159 to 164, glycine 189, and 209 to 210; these read YLEYSG and GN.

The protein belongs to the GGGP/HepGP synthase family. Group I subfamily. In terms of assembly, homodimer. Mg(2+) serves as cofactor.

It carries out the reaction sn-glycerol 1-phosphate + all-trans-heptaprenyl diphosphate = 3-heptaprenyl-sn-glycero-1-phosphate + diphosphate. It functions in the pathway membrane lipid metabolism; glycerophospholipid metabolism. In terms of biological role, prenyltransferase that catalyzes in vivo the transfer of the heptaprenyl moiety of heptaprenyl pyrophosphate (HepPP; 35 carbon atoms) to the C3 hydroxyl of sn-glycerol-1-phosphate (G1P), producing heptaprenylglyceryl phosphate (HepGP). This reaction is an ether-bond-formation step in the biosynthesis of archaea-type G1P-based membrane lipids found in Bacillales. In Shouchella clausii (strain KSM-K16) (Alkalihalobacillus clausii), this protein is Heptaprenylglyceryl phosphate synthase.